A 149-amino-acid chain; its full sequence is MPNETKRERLRELGALNARPEAVRAPWFRESTFFDPLDLVQVKYEMLRHVQEDGVNKADAAALFGLSRPTYYQAEAAFERDGIAGLLPRTRGPKSAHKLTDEVMQLIEQNQHAGAPLQARSLAELLHSTLGISVHPRSIERAIARKKKR.

This sequence to Rhizobium NGR234A y4oM.

This is an uncharacterized protein from Sinorhizobium fredii (strain NBRC 101917 / NGR234).